The following is a 225-amino-acid chain: Ribonuclease 3 (225 aa).

Residues 5 to 127 (IEKLTRQLGY…IIGAVYLDSD (123 aa)) form the RNase III domain. E40 contacts Mg(2+). D44 is a catalytic residue. D113 and E116 together coordinate Mg(2+). The active site involves E116. Residues 154-224 (DPKTRLQEFL…AELALEQLTN (71 aa)) enclose the DRBM domain.

It belongs to the ribonuclease III family. As to quaternary structure, homodimer. Mg(2+) serves as cofactor.

The protein localises to the cytoplasm. The enzyme catalyses Endonucleolytic cleavage to 5'-phosphomonoester.. Functionally, digests double-stranded RNA. Involved in the processing of primary rRNA transcript to yield the immediate precursors to the large and small rRNAs (23S and 16S). Processes some mRNAs, and tRNAs when they are encoded in the rRNA operon. Processes pre-crRNA and tracrRNA of type II CRISPR loci if present in the organism. In Vibrio vulnificus (strain YJ016), this protein is Ribonuclease 3.